The following is a 157-amino-acid chain: Transcriptional repressor NrdR (157 aa).

Residues 1-24 (MRCPKCGGNKSSVVDSRQAEDGNT) are disordered. The segment at 3 to 34 (CPKCGGNKSSVVDSRQAEDGNTIRRRRECEEC) is a zinc-finger region. The ATP-cone domain maps to 49–139 (LVVVKKDGTR…VYRSFKDVGE (91 aa)).

It belongs to the NrdR family. Zn(2+) is required as a cofactor.

Negatively regulates transcription of bacterial ribonucleotide reductase nrd genes and operons by binding to NrdR-boxes. The protein is Transcriptional repressor NrdR of Streptococcus sanguinis (strain SK36).